The following is a 253-amino-acid chain: Dihydroanticapsin 7-dehydrogenase (253 aa).

Residue 9 to 31 (LITGGASGIGYAAVQAFLNQQAN) participates in NAD(+) binding. Position 139 (Ser-139) interacts with substrate. The Proton acceptor role is filled by Tyr-152.

Belongs to the short-chain dehydrogenases/reductases (SDR) family.

It catalyses the reaction L-dihydroanticapsin + NAD(+) = L-anticapsin + NADH + H(+). It functions in the pathway antibiotic biosynthesis; bacilysin biosynthesis. Its function is as follows. Part of the bacABCDEFG operon responsible for the biosynthesis of bacilysin, an irreversible inactivator of the glutaminase domain of glucosamine synthetase. Catalyzes the dehydrogenation of the C7-hydroxyl group in the 4S-tetrahydrotyrosine (4S-H4Tyr) to yield anticapsin (epoxycyclohexanonyl-Ala). The sequence is that of Dihydroanticapsin 7-dehydrogenase from Bacillus subtilis.